Consider the following 430-residue polypeptide: Trigger factor (430 aa).

A PPIase FKBP-type domain is found at 163 to 248 (GNIAIIDFKG…IKDIKVKELP (86 aa)).

This sequence belongs to the FKBP-type PPIase family. Tig subfamily.

It is found in the cytoplasm. The catalysed reaction is [protein]-peptidylproline (omega=180) = [protein]-peptidylproline (omega=0). Its function is as follows. Involved in protein export. Acts as a chaperone by maintaining the newly synthesized protein in an open conformation. Functions as a peptidyl-prolyl cis-trans isomerase. The polypeptide is Trigger factor (Clostridium botulinum (strain Okra / Type B1)).